The primary structure comprises 262 residues: Cytochrome c oxidase subunit 3 (262 aa).

7 helical membrane passes run 16–36 (PWPL…VQWF), 42–59 (TLFL…YQWW), 83–103 (GMIL…WAFF), 128–148 (FQIP…VTWA), 163–183 (SLFF…YEYI), 198–218 (FFVA…FLLI), and 240–260 (AWYW…IYWW).

It belongs to the cytochrome c oxidase subunit 3 family. Component of the cytochrome c oxidase (complex IV, CIV), a multisubunit enzyme composed of a catalytic core of 3 subunits and several supernumerary subunits. The complex exists as a monomer or a dimer and forms supercomplexes (SCs) in the inner mitochondrial membrane with ubiquinol-cytochrome c oxidoreductase (cytochrome b-c1 complex, complex III, CIII).

Its subcellular location is the mitochondrion inner membrane. The catalysed reaction is 4 Fe(II)-[cytochrome c] + O2 + 8 H(+)(in) = 4 Fe(III)-[cytochrome c] + 2 H2O + 4 H(+)(out). In terms of biological role, component of the cytochrome c oxidase, the last enzyme in the mitochondrial electron transport chain which drives oxidative phosphorylation. The respiratory chain contains 3 multisubunit complexes succinate dehydrogenase (complex II, CII), ubiquinol-cytochrome c oxidoreductase (cytochrome b-c1 complex, complex III, CIII) and cytochrome c oxidase (complex IV, CIV), that cooperate to transfer electrons derived from NADH and succinate to molecular oxygen, creating an electrochemical gradient over the inner membrane that drives transmembrane transport and the ATP synthase. Cytochrome c oxidase is the component of the respiratory chain that catalyzes the reduction of oxygen to water. Electrons originating from reduced cytochrome c in the intermembrane space (IMS) are transferred via the dinuclear copper A center (CU(A)) of subunit 2 and heme A of subunit 1 to the active site in subunit 1, a binuclear center (BNC) formed by heme A3 and copper B (CU(B)). The BNC reduces molecular oxygen to 2 water molecules using 4 electrons from cytochrome c in the IMS and 4 protons from the mitochondrial matrix. This Aedes aegypti (Yellowfever mosquito) protein is Cytochrome c oxidase subunit 3.